The primary structure comprises 241 residues: Demethylmenaquinone methyltransferase (241 aa).

S-adenosyl-L-methionine is bound by residues threonine 60, aspartate 81, and 106–107 (DA).

It belongs to the class I-like SAM-binding methyltransferase superfamily. MenG/UbiE family.

It catalyses the reaction a 2-demethylmenaquinol + S-adenosyl-L-methionine = a menaquinol + S-adenosyl-L-homocysteine + H(+). The protein operates within quinol/quinone metabolism; menaquinone biosynthesis; menaquinol from 1,4-dihydroxy-2-naphthoate: step 2/2. Methyltransferase required for the conversion of demethylmenaquinol (DMKH2) to menaquinol (MKH2). The protein is Demethylmenaquinone methyltransferase of Staphylococcus aureus (strain Mu3 / ATCC 700698).